A 103-amino-acid chain; its full sequence is Large ribosomal subunit protein bL21 (103 aa).

The protein belongs to the bacterial ribosomal protein bL21 family. Part of the 50S ribosomal subunit. Contacts protein L20.

Its function is as follows. This protein binds to 23S rRNA in the presence of protein L20. This Alkaliphilus oremlandii (strain OhILAs) (Clostridium oremlandii (strain OhILAs)) protein is Large ribosomal subunit protein bL21.